The primary structure comprises 124 residues: Large ribosomal subunit protein bL12 (124 aa).

This sequence belongs to the bacterial ribosomal protein bL12 family. Homodimer. Part of the ribosomal stalk of the 50S ribosomal subunit. Forms a multimeric L10(L12)X complex, where L10 forms an elongated spine to which 2 to 4 L12 dimers bind in a sequential fashion. Binds GTP-bound translation factors.

Its function is as follows. Forms part of the ribosomal stalk which helps the ribosome interact with GTP-bound translation factors. Is thus essential for accurate translation. In Janthinobacterium sp. (strain Marseille) (Minibacterium massiliensis), this protein is Large ribosomal subunit protein bL12.